The chain runs to 195 residues: Myelin-associated neurite-outgrowth inhibitor (195 aa).

Topologically, residues 1–18 (MNPVYSPASSGVPYANPK) are cytoplasmic. A helical membrane pass occupies residues 19 to 43 (GIGYPAGFPVGYAAAAPAYSPSMYP). At 44–143 (GANPAFPSGY…APPIPPPRPN (100 aa)) the chain is on the extracellular side. Residues 144–163 (GVTMGMVGGTTMAMSAGTLL) traverse the membrane as a helical segment. At 164 to 195 (TTHSPTPVAPHPSMPTYRQPATPTYSYVPPQW) the chain is on the cytoplasmic side.

The protein belongs to the FAM168 family.

The protein localises to the cytoplasm. It localises to the perinuclear region. The protein resides in the cell membrane. It is found in the cell projection. Its subcellular location is the axon. Its function is as follows. Inhibitor of neuronal axonal outgrowth. The polypeptide is Myelin-associated neurite-outgrowth inhibitor (fam168b) (Danio rerio (Zebrafish)).